The chain runs to 255 residues: 5'-nucleotidase SurE (255 aa).

A divalent metal cation is bound by residues Asp-8, Asp-9, Ser-39, and Asn-95.

Belongs to the SurE nucleotidase family. It depends on a divalent metal cation as a cofactor.

The protein resides in the cytoplasm. The enzyme catalyses a ribonucleoside 5'-phosphate + H2O = a ribonucleoside + phosphate. Nucleotidase that shows phosphatase activity on nucleoside 5'-monophosphates. The sequence is that of 5'-nucleotidase SurE from Herpetosiphon aurantiacus (strain ATCC 23779 / DSM 785 / 114-95).